Here is a 183-residue protein sequence, read N- to C-terminus: Adenine phosphoribosyltransferase (183 aa).

Belongs to the purine/pyrimidine phosphoribosyltransferase family. As to quaternary structure, homodimer.

The protein localises to the cytoplasm. The catalysed reaction is AMP + diphosphate = 5-phospho-alpha-D-ribose 1-diphosphate + adenine. Its pathway is purine metabolism; AMP biosynthesis via salvage pathway; AMP from adenine: step 1/1. In terms of biological role, catalyzes a salvage reaction resulting in the formation of AMP, that is energically less costly than de novo synthesis. This chain is Adenine phosphoribosyltransferase, found in Shewanella oneidensis (strain ATCC 700550 / JCM 31522 / CIP 106686 / LMG 19005 / NCIMB 14063 / MR-1).